The primary structure comprises 286 residues: ATP-binding protein ChvD (286 aa).

Residues 21-85 (KLQDMIDSQN…DLLLLDEPTN (65 aa)) enclose the ABC transporter domain.

It belongs to the ABC transporter superfamily.

The induction of virG by growth under acidic conditions and by phosphate starvation, in the absence of plant inducers, is influenced by ChvD. This Rhizobium radiobacter (Agrobacterium tumefaciens) protein is ATP-binding protein ChvD (chvD).